Reading from the N-terminus, the 219-residue chain is Proteasome subunit beta 2 (219 aa).

Positions 1-25 (MAEWIAGGLEGPAGRGLDERVVRSG) are cleaved as a propeptide — removed in mature form; by autocatalysis. The active-site Nucleophile is the Thr26.

This sequence belongs to the peptidase T1B family. The 20S proteasome core is composed of 14 alpha and 14 beta subunits that assemble into four stacked heptameric rings, resulting in a barrel-shaped structure. The two inner rings, each composed of seven catalytic beta subunits, are sandwiched by two outer rings, each composed of seven alpha subunits. The catalytic chamber with the active sites is on the inside of the barrel. Has a gated structure, the ends of the cylinder being occluded by the N-termini of the alpha-subunits. Is capped at one or both ends by the proteasome regulatory ATPase, PAN.

It localises to the cytoplasm. It carries out the reaction Cleavage of peptide bonds with very broad specificity.. The formation of the proteasomal ATPase PAN-20S proteasome complex, via the docking of the C-termini of PAN into the intersubunit pockets in the alpha-rings, triggers opening of the gate for substrate entry. Interconversion between the open-gate and close-gate conformations leads to a dynamic regulation of the 20S proteasome proteolysis activity. Component of the proteasome core, a large protease complex with broad specificity involved in protein degradation. The sequence is that of Proteasome subunit beta 2 from Aeropyrum pernix (strain ATCC 700893 / DSM 11879 / JCM 9820 / NBRC 100138 / K1).